The following is a 139-amino-acid chain: Plastocyanin (139 aa).

The first 34 residues, 1 to 34 (MKLIAASLRRLSLAVLTVLLVVSSFAVFTPSAAA), serve as a signal peptide directing secretion. Residues 35–135 (ETYTVKLGSD…HRGAGMVGKI (101 aa)) enclose the Plastocyanin-like domain. Cu cation contacts are provided by His-73, Cys-123, His-126, and Met-131.

Belongs to the plastocyanin family. It depends on Cu(2+) as a cofactor.

The protein resides in the cellular thylakoid membrane. Participates in electron transfer between P700 and the cytochrome b6-f complex in photosystem I. The sequence is that of Plastocyanin (petE) from Trichormus variabilis (strain ATCC 29413 / PCC 7937) (Anabaena variabilis).